The sequence spans 156 residues: Large ribosomal subunit protein uL15 (156 aa).

Residues 14–35 form a disordered region; that stretch reads GSRTHGWGRVGQHRKSGSSGGK.

It belongs to the universal ribosomal protein uL15 family. In terms of assembly, part of the 50S ribosomal subunit.

Its function is as follows. Binds to the 23S rRNA. The protein is Large ribosomal subunit protein uL15 of Pyrobaculum islandicum (strain DSM 4184 / JCM 9189 / GEO3).